Here is a 310-residue protein sequence, read N- to C-terminus: MKKCRFLVLLLLAFVGLAACSSQKSSTDSSSSKLNVVATNSIIADITKNIAGDKINLHSIVPVGQDPHKYEPLPEDVKKTSKADLIFYNGINLETGGNAWFTKLVENAQKKENKDYYAVSEGVDVIYLEGQNEKGKEDPHAWLNLENGIIYAQNIAKRLIEKDPDNKATYEKNLKAYIEKLTALDKEAKEKFNNIPEEKKMIVTSEGCPKYFSKAYNVPSAYIWEINTEEEGTPDQIKSLVEKLRKTKVPSLFVESSVDDRPMKTVSKDTNIPIYAKIFTDSIAEKGEDGDSYYSMMKYNLDKISEGLAK.

Positions 1–19 (MKKCRFLVLLLLAFVGLAA) are cleaved as a signal peptide. Cys20 carries N-palmitoyl cysteine lipidation. Cys20 carries the S-diacylglycerol cysteine lipid modification. Residues His68, His140, Glu206, and Asp281 each contribute to the Mn(2+) site.

This sequence belongs to the bacterial solute-binding protein 9 family. Lipoprotein receptor antigen (Lrai) subfamily. In terms of assembly, the complex is composed of two ATP-binding proteins (ScaC), two transmembrane proteins (ScaB) and a solute-binding protein (ScaA).

The protein resides in the cell membrane. Its function is as follows. Part of ATP-binding cassette (ABC) transport system ScaABC involved in manganese import. Essential for growth under Mn(2+)-limiting conditions. Also acts as an adhesin which is involved on adherence to extracellular matrix. It is an important factor in pathogenesis and infection. This chain is Manganese ABC transporter substrate-binding lipoprotein scaA, found in Streptococcus gordonii.